We begin with the raw amino-acid sequence, 318 residues long: MLSFVLLLCVALVNAYSDPGACSGTCWAHDPNVIRRVSDGTYFRFSTGGGVHISSASAITGPWTDLGYALPNGSIVTVGNASNLWAPDVHYVDGTYYMYYASSTLGSRDSTIGVATSTTLEADSWTDHGEIGVTSSSSTPYNAIDPNWITIGSTPYLQFGSYWQGLYQVEMTDSLSASSSTPTNLAYNASGNHAIEASYLYEYGGYYYLTFSSGKAQGYTTSLPAQGDEYRIVVCRSKTGTGNFVDKDGVSCLNSGGTTVLASHDYVYGPGGQGIINTTSHGIVVYYHYANKNIGLAVDDYQFGWNTLTWTDGWPVVA.

The N-terminal stretch at 1–28 (MLSFVLLLCVALVNAYSDPGACSGTCWA) is a signal peptide. Asp-30 serves as the catalytic Proton acceptor. Residues Asn-72, Asn-80, and Asn-188 are each glycosylated (N-linked (GlcNAc...) asparagine). The active-site Proton donor is the Glu-196. Asn-277 carries an N-linked (GlcNAc...) asparagine glycan.

The protein belongs to the glycosyl hydrolase 43 family.

The protein localises to the secreted. The enzyme catalyses Endohydrolysis of (1-&gt;5)-alpha-arabinofuranosidic linkages in (1-&gt;5)-arabinans.. It participates in glycan metabolism; L-arabinan degradation. Functionally, endo-1,5-alpha-L-arabinanase involved in degradation of pectin. Its preferred substrate is linear 1,5-alpha-L-arabinan. In Aspergillus niger (strain ATCC MYA-4892 / CBS 513.88 / FGSC A1513), this protein is Probable arabinan endo-1,5-alpha-L-arabinosidase C (abnC).